The primary structure comprises 273 residues: tRNA pseudouridine synthase B (273 aa).

Residue Asp-38 is the Nucleophile of the active site.

It belongs to the pseudouridine synthase TruB family. Type 1 subfamily.

The enzyme catalyses uridine(55) in tRNA = pseudouridine(55) in tRNA. In terms of biological role, responsible for synthesis of pseudouridine from uracil-55 in the psi GC loop of transfer RNAs. The chain is tRNA pseudouridine synthase B from Sulfurimonas denitrificans (strain ATCC 33889 / DSM 1251) (Thiomicrospira denitrificans (strain ATCC 33889 / DSM 1251)).